We begin with the raw amino-acid sequence, 394 residues long: Putative gustatory receptor 22a (394 aa).

Residues methionine 1–arginine 16 are Cytoplasmic-facing. Residues phenylalanine 17–aspartate 37 traverse the membrane as a helical segment. Residues serine 38–lysine 47 are Extracellular-facing. Asparagine 44 carries an N-linked (GlcNAc...) asparagine glycan. Residues tryptophan 48–serine 68 traverse the membrane as a helical segment. Residues threonine 69–lysine 148 are Cytoplasmic-facing. A helical transmembrane segment spans residues glycine 149 to serine 169. Lysine 170 is a topological domain (extracellular). The helical transmembrane segment at isoleucine 171–methionine 191 threads the bilayer. Residues histidine 192–leucine 256 are Cytoplasmic-facing. A helical transmembrane segment spans residues phenylalanine 257–isoleucine 277. A glycan (N-linked (GlcNAc...) asparagine) is linked at asparagine 278. The Extracellular portion of the chain corresponds to asparagine 278–arginine 281. Residues phenylalanine 282–leucine 302 form a helical membrane-spanning segment. At tryptophan 303–aspartate 361 the chain is on the cytoplasmic side. A helical transmembrane segment spans residues isoleucine 362–valine 382. Over glutamine 383–aspartate 394 the chain is Extracellular.

This sequence belongs to the insect chemoreceptor superfamily. Gustatory receptor (GR) family. Gr22e subfamily. In terms of tissue distribution, expressed in neurons of the terminal external chemosensory organ of larvae.

It is found in the cell membrane. Probable gustatory receptor which mediates acceptance or avoidance behavior, depending on its substrates. In Drosophila melanogaster (Fruit fly), this protein is Putative gustatory receptor 22a (Gr22a).